Here is a 456-residue protein sequence, read N- to C-terminus: Glycerol-3-phosphate acyltransferase 4 (456 aa).

The signal sequence occupies residues 1-37 (MFLLLPFDSLIVNLLGISLTVLFTLLLVFIIVPAIFG). Transmembrane regions (helical) follow at residues 156 to 176 (ISLRLTVLWGLGVLIRYCFLL) and 180 to 200 (IALAFTGISLLVVGTTVVGYL). Residue asparagine 247 is glycosylated (N-linked (GlcNAc...) asparagine). Positions 248 to 253 (HTSPID) match the HXXXXD motif motif. N-linked (GlcNAc...) asparagine glycans are attached at residues asparagine 327, asparagine 328, and asparagine 362.

This sequence belongs to the 1-acyl-sn-glycerol-3-phosphate acyltransferase family.

The protein resides in the endoplasmic reticulum membrane. It catalyses the reaction sn-glycerol 3-phosphate + an acyl-CoA = a 1-acyl-sn-glycero-3-phosphate + CoA. The catalysed reaction is dodecanoyl-CoA + sn-glycerol 3-phosphate = 1-dodecanoyl-sn-glycerol 3-phosphate + CoA. The enzyme catalyses sn-glycerol 3-phosphate + hexadecanoyl-CoA = 1-hexadecanoyl-sn-glycero-3-phosphate + CoA. It carries out the reaction sn-glycerol 3-phosphate + octadecanoyl-CoA = 1-octadecanoyl-sn-glycero-3-phosphate + CoA. It catalyses the reaction sn-glycerol 3-phosphate + (9Z)-octadecenoyl-CoA = 1-(9Z-octadecenoyl)-sn-glycero-3-phosphate + CoA. The catalysed reaction is (9Z,12Z)-octadecadienoyl-CoA + sn-glycerol 3-phosphate = 1-(9Z,12Z)-octadecadienoyl-sn-glycero-3-phosphate + CoA. Its pathway is phospholipid metabolism; CDP-diacylglycerol biosynthesis; CDP-diacylglycerol from sn-glycerol 3-phosphate: step 1/3. In terms of biological role, converts glycerol-3-phosphate to 1-acyl-sn-glycerol-3-phosphate (lysophosphatidic acid or LPA) by incorporating an acyl moiety at the sn-1 position of the glycerol backbone. Active against both saturated and unsaturated long-chain fatty acyl-CoAs. Protects cells against lipotoxicity. The polypeptide is Glycerol-3-phosphate acyltransferase 4 (Pongo abelii (Sumatran orangutan)).